The following is a 231-amino-acid chain: Large ribosomal subunit protein uL1 (231 aa).

Belongs to the universal ribosomal protein uL1 family. In terms of assembly, part of the 50S ribosomal subunit.

Functionally, binds directly to 23S rRNA. The L1 stalk is quite mobile in the ribosome, and is involved in E site tRNA release. Its function is as follows. Protein L1 is also a translational repressor protein, it controls the translation of the L11 operon by binding to its mRNA. The protein is Large ribosomal subunit protein uL1 of Neisseria meningitidis serogroup A / serotype 4A (strain DSM 15465 / Z2491).